Reading from the N-terminus, the 1346-residue chain is Pikromycin polyketide synthase component PikAIV (1346 aa).

A coiled-coil region spans residues 3-32 (SSNEQLVDALRASLKENEELRKESRRRADR). Positions 34–461 (QEPMAIVGMS…GTNAHVVLEE (428 aa)) constitute a Ketosynthase family 3 (KS3) domain. A module 6 region spans residues 37-1332 (MAIVGMSCRF…HAPAVAEAVL (1296 aa)). Residues Cys-207, His-342, and His-382 each act as for beta-ketoacyl synthase activity in the active site. Positions 562 to 844 (FVFPGQGTQW…VLTMTLPDKV (283 aa)) are acyltransferase. Ser-652 serves as the catalytic Acyl-ester intermediate; for acyltransferase activity. Residues 945-1020 (SAVLAMVMRQ…ALAERISDEL (76 aa)) enclose the Carrier domain. O-(pantetheine 4'-phosphoryl)serine is present on Ser-980. Positions 1028-1050 (AEPSDHEQAEEEKAAAPAGARSG) are disordered. Positions 1030–1041 (PSDHEQAEEEKA) are enriched in basic and acidic residues. Position 1125 (Thr-1125) interacts with substrate. Positions 1127-1332 (ANGGPHEFLR…HAPAVAEAVL (206 aa)) are thioesterase. Catalysis depends on Ser-1196, which acts as the Nucleophile; for thioesterase activity. Residues Gly-1197 and Asp-1224 each contribute to the substrate site. Catalysis depends on His-1316, which acts as the Proton acceptor; for thioesterase activity.

Homodimer. Pikromycin PKS consists of a combination of multimodular (PikAI and PikAII) and monomodular (PikAIII and PikAIV) polypeptides each coding for a functional synthase subunit which participates in 1 (monomodular) or 2 (multimodular) of the six FAS-like elongation steps required for formation of the polyketide. Module 1, 2, 3, 4, 5, and 6 participating in biosynthesis steps 1, 2, 3, 4, 5, and 6, respectively. It depends on pantetheine 4'-phosphate as a cofactor.

It carries out the reaction 5 (S)-methylmalonyl-CoA + malonyl-CoA + 5 NADPH + 11 H(+) = 10-deoxymethynolide + 6 CO2 + 5 NADP(+) + 6 CoA + 2 H2O. It catalyses the reaction 6 (S)-methylmalonyl-CoA + malonyl-CoA + 5 NADPH + 12 H(+) = narbonolide + 7 CO2 + 5 NADP(+) + 7 CoA + 2 H2O. It participates in antibiotic biosynthesis. With respect to regulation, irreversibly inhibited by (2S,3R,4S)-2,4-dihydroxy-3-methylhexyl-phosphonic acid and (3R,4S)-4-hydroxy-3-methyl-2-oxohexyl-phosphonic acid. Involved in the biosynthesis of 12- and 14-membered ring macrolactone antibiotics such as methymycin and neomethymycin, and pikromycin and narbomycin, respectively. Component of the pikromycin PKS which catalyzes the biosynthesis of both precursors 10-deoxymethynolide (12-membered ring macrolactone) and narbonolide (14-membered ring macrolactone). Chain elongation through PikAI, PikAII and PikAIII followed by thioesterase catalyzed termination results in the production of 10-deoxymethynolide, while continued elongation through PikAIV, followed by thioesterase (TE) catalyzed cyclization results in the biosynthesis of the narbonolide. The thioesterase can use a series of diketide-N-acetylcysteamine (SNAC) thioesters, but has a strong preference for the 2-methyl-3-ketopentanoyl-SNAC over the stereoisomers of 2-methyl-3-hydroxyacyl-SNAC. The chain is Pikromycin polyketide synthase component PikAIV from Streptomyces venezuelae.